The primary structure comprises 159 residues: 2-C-methyl-D-erythritol 2,4-cyclodiphosphate synthase (159 aa).

Positions 8 and 10 each coordinate a divalent metal cation. 4-CDP-2-C-methyl-D-erythritol 2-phosphate-binding positions include 8-10 and 34-35; these read DVH and HS. Histidine 42 contributes to the a divalent metal cation binding site. Residues 56 to 58, 61 to 65, 100 to 106, 132 to 135, phenylalanine 139, and arginine 142 each bind 4-CDP-2-C-methyl-D-erythritol 2-phosphate; these read DIG, FPDTD, AQAPKML, and TTTE.

The protein belongs to the IspF family. In terms of assembly, homotrimer. It depends on a divalent metal cation as a cofactor.

It catalyses the reaction 4-CDP-2-C-methyl-D-erythritol 2-phosphate = 2-C-methyl-D-erythritol 2,4-cyclic diphosphate + CMP. Its pathway is isoprenoid biosynthesis; isopentenyl diphosphate biosynthesis via DXP pathway; isopentenyl diphosphate from 1-deoxy-D-xylulose 5-phosphate: step 4/6. In terms of biological role, involved in the biosynthesis of isopentenyl diphosphate (IPP) and dimethylallyl diphosphate (DMAPP), two major building blocks of isoprenoid compounds. Catalyzes the conversion of 4-diphosphocytidyl-2-C-methyl-D-erythritol 2-phosphate (CDP-ME2P) to 2-C-methyl-D-erythritol 2,4-cyclodiphosphate (ME-CPP) with a corresponding release of cytidine 5-monophosphate (CMP). This chain is 2-C-methyl-D-erythritol 2,4-cyclodiphosphate synthase, found in Escherichia coli O139:H28 (strain E24377A / ETEC).